We begin with the raw amino-acid sequence, 374 residues long: Serine/threonine-protein kinase-transforming protein mos (374 aa).

In terms of domain architecture, Protein kinase spans 94–370 (VCLMHRLGSG…LLQRDLKAFR (277 aa)). ATP contacts are provided by residues 100 to 108 (LGSGGFGSV) and K121. The active-site Proton acceptor is the D229.

This sequence belongs to the protein kinase superfamily. Ser/Thr protein kinase family.

The catalysed reaction is L-seryl-[protein] + ATP = O-phospho-L-seryl-[protein] + ADP + H(+). It carries out the reaction L-threonyl-[protein] + ATP = O-phospho-L-threonyl-[protein] + ADP + H(+). In Mus musculus (Mouse), this protein is Serine/threonine-protein kinase-transforming protein mos (V-MOS).